The primary structure comprises 270 residues: 25S rRNA adenine-N(1) methyltransferase (270 aa).

Residues Gly-111 and Asp-131 each coordinate S-adenosyl-L-methionine.

The protein belongs to the BMT2 family.

The protein localises to the nucleus. It is found in the nucleolus. In terms of biological role, S-adenosyl-L-methionine-dependent methyltransferase that specifically methylates the N(1) position of an adenine present in helix 65 in 25S rRNA. The protein is 25S rRNA adenine-N(1) methyltransferase of Schizosaccharomyces pombe (strain 972 / ATCC 24843) (Fission yeast).